We begin with the raw amino-acid sequence, 351 residues long: Phosphoribosylformylglycinamidine cyclo-ligase (351 aa).

This sequence belongs to the AIR synthase family.

Its subcellular location is the cytoplasm. The catalysed reaction is 2-formamido-N(1)-(5-O-phospho-beta-D-ribosyl)acetamidine + ATP = 5-amino-1-(5-phospho-beta-D-ribosyl)imidazole + ADP + phosphate + H(+). It functions in the pathway purine metabolism; IMP biosynthesis via de novo pathway; 5-amino-1-(5-phospho-D-ribosyl)imidazole from N(2)-formyl-N(1)-(5-phospho-D-ribosyl)glycinamide: step 2/2. This chain is Phosphoribosylformylglycinamidine cyclo-ligase, found in Xylella fastidiosa (strain Temecula1 / ATCC 700964).